Consider the following 418-residue polypeptide: Serine hydroxymethyltransferase (418 aa).

Residues Leu-121 and 125-127 (GHL) each bind (6S)-5,6,7,8-tetrahydrofolate. At Lys-230 the chain carries N6-(pyridoxal phosphate)lysine. 356-358 (SPF) is a (6S)-5,6,7,8-tetrahydrofolate binding site.

The protein belongs to the SHMT family. In terms of assembly, homodimer. Pyridoxal 5'-phosphate serves as cofactor.

It is found in the cytoplasm. It catalyses the reaction (6R)-5,10-methylene-5,6,7,8-tetrahydrofolate + glycine + H2O = (6S)-5,6,7,8-tetrahydrofolate + L-serine. The protein operates within one-carbon metabolism; tetrahydrofolate interconversion. Its pathway is amino-acid biosynthesis; glycine biosynthesis; glycine from L-serine: step 1/1. In terms of biological role, catalyzes the reversible interconversion of serine and glycine with tetrahydrofolate (THF) serving as the one-carbon carrier. This reaction serves as the major source of one-carbon groups required for the biosynthesis of purines, thymidylate, methionine, and other important biomolecules. Also exhibits THF-independent aldolase activity toward beta-hydroxyamino acids, producing glycine and aldehydes, via a retro-aldol mechanism. This Idiomarina loihiensis (strain ATCC BAA-735 / DSM 15497 / L2-TR) protein is Serine hydroxymethyltransferase.